The primary structure comprises 310 residues: MPEQGPRMNGFSLGELCWLFCCPPCPSRIAAKLAFLPPEPTYTVREMEAPAGTAQPPREEGSGEPAACSLHLSERADWQYSQRELDAVEVFRWRTERGSCLGCMFVRCSPGSRYTVLFSHGNAVDLGQMCSFYIGLGTRINCNIFSYDYSGYGVSSGKPSEKNLYADIEAAWHALRTRYGVTPENIILYGQSIGTVPTVDLASRYECAAVILHSPLMSGLRVAFPDTRKTYCFDAFPSIDKISKVTSPVLIIHGTEDEVIDFSHGLAMYERCPRAVEPLWVEGAGHNDIELYAQYLERLKQFISHELPNS.

Catalysis depends on charge relay system residues Ser192, Asp257, and His286.

Belongs to the AB hydrolase superfamily. ABHD17 family. Palmitoylated on cysteine residues located in a cysteine cluster at the N-terminus which promotes membrane localization.

The protein localises to the recycling endosome membrane. It is found in the cell projection. The protein resides in the dendritic spine. Its subcellular location is the postsynaptic density membrane. The enzyme catalyses S-hexadecanoyl-L-cysteinyl-[protein] + H2O = L-cysteinyl-[protein] + hexadecanoate + H(+). Its function is as follows. Hydrolyzes fatty acids from S-acylated cysteine residues in proteins. This is Alpha/beta hydrolase domain-containing protein 17C from Xenopus tropicalis (Western clawed frog).